A 128-amino-acid chain; its full sequence is Sulfurtransferase TusD (128 aa).

The active-site Cysteine persulfide intermediate is the cysteine 78.

This sequence belongs to the DsrE/TusD family. Heterohexamer, formed by a dimer of trimers. The hexameric TusBCD complex contains 2 copies each of TusB, TusC and TusD. The TusBCD complex interacts with TusE.

The protein localises to the cytoplasm. In terms of biological role, part of a sulfur-relay system required for 2-thiolation of 5-methylaminomethyl-2-thiouridine (mnm(5)s(2)U) at tRNA wobble positions. Accepts sulfur from TusA and transfers it in turn to TusE. The polypeptide is Sulfurtransferase TusD (Salmonella dublin (strain CT_02021853)).